The sequence spans 98 residues: Co-chaperonin GroES (98 aa).

Belongs to the GroES chaperonin family. As to quaternary structure, heptamer of 7 subunits arranged in a ring. Interacts with the chaperonin GroEL.

The protein localises to the cytoplasm. Functionally, together with the chaperonin GroEL, plays an essential role in assisting protein folding. The GroEL-GroES system forms a nano-cage that allows encapsulation of the non-native substrate proteins and provides a physical environment optimized to promote and accelerate protein folding. GroES binds to the apical surface of the GroEL ring, thereby capping the opening of the GroEL channel. The protein is Co-chaperonin GroES of Coprothermobacter proteolyticus (strain ATCC 35245 / DSM 5265 / OCM 4 / BT).